Reading from the N-terminus, the 686-residue chain is Delta-like protein 4 (686 aa).

A signal peptide spans 1–26 (MTPASRSACRWALLLLAVLWPQQRAA). The Extracellular portion of the chain corresponds to 27–532 (GSGIFQLRLQ…GLPPSFPWVA (506 aa)). Intrachain disulfides connect Cys51–Cys55 and Cys62–Cys75. N-linked (GlcNAc...) asparagine glycosylation is found at Asn79, Asn109, and Asn162. Residues 174–218 (VICSDNYYGESCSRLCKKRDDHFGHYECQPDGSLSCLPGWTGKYC) enclose the DSL domain. Cys176 and Cys185 are oxidised to a cystine. Interaction with Notch1 stretches follow at residues 186–188 (SRL) and 192–196 (RDDHF). 26 disulfides stabilise this stretch: Cys189-Cys201, Cys209-Cys218, Cys223-Cys234, Cys227-Cys240, Cys242-Cys251, Cys254-Cys265, Cys260-Cys271, Cys273-Cys282, Cys289-Cys301, Cys295-Cys311, Cys313-Cys322, Cys329-Cys340, Cys334-Cys349, Cys351-Cys360, Cys367-Cys378, Cys372-Cys389, Cys391-Cys400, Cys407-Cys418, Cys412-Cys427, Cys429-Cys438, Cys445-Cys456, Cys450-Cys465, Cys467-Cys476, Cys485-Cys496, Cys490-Cys507, and Cys509-Cys518. 8 consecutive EGF-like domains span residues 219–252 (DQPI…RLCN), 253–283 (ECIP…LFCD), 285–323 (DLNY…EHCE), 325–361 (GLSK…QHCE), 364–401 (TLTC…SNCE), 403–439 (KVDR…THCE), 441–477 (HISD…RRCE), and 481–519 (THDA…SRCE). Asn297 carries an N-linked (GlcNAc...) asparagine glycan. An N-linked (GlcNAc...) asparagine glycan is attached at Asn394. A helical transmembrane segment spans residues 533 to 553 (VSLGVGLVVLLVLLVMVVVAV). At 554-686 (RQLRLRRPDD…RNECVIATEV (133 aa)) the chain is on the cytoplasmic side.

Interacts with NOTCH4. Interacts (via N-terminal DSL and MNNL domains) with NOTCH1 (via EGF-like domains). In terms of tissue distribution, expressed in vascular endothelium. Expressed in retina at least during embryogenesis.

The protein localises to the cell membrane. In terms of biological role, involved in the Notch signaling pathway as Notch ligand. Activates NOTCH1 and NOTCH4. Involved in angiogenesis; negatively regulates endothelial cell proliferation and migration and angiogenic sprouting. Essential for retinal progenitor proliferation. Required for suppressing rod fates in late retinal progenitors as well as for proper generation of other retinal cell types. During spinal cord neurogenesis, inhibits V2a interneuron fate. This chain is Delta-like protein 4 (Dll4), found in Mus musculus (Mouse).